An 87-amino-acid chain; its full sequence is Large ribosomal subunit protein bL31B (87 aa).

The protein belongs to the bacterial ribosomal protein bL31 family. Type B subfamily. In terms of assembly, part of the 50S ribosomal subunit.

In Shigella boydii serotype 4 (strain Sb227), this protein is Large ribosomal subunit protein bL31B.